The chain runs to 365 residues: Glutamate 5-kinase 1 (365 aa).

Lys-9 provides a ligand contact to ATP. The substrate site is built by Ser-49, Asp-136, and Asn-148. Residues 168–169 (TD) and 210–216 (TGGMKSK) each bind ATP. The PUA domain occupies 276-353 (SGEIIIDAGA…DELDFEKTFE (78 aa)).

The protein belongs to the glutamate 5-kinase family.

Its subcellular location is the cytoplasm. The catalysed reaction is L-glutamate + ATP = L-glutamyl 5-phosphate + ADP. Its pathway is amino-acid biosynthesis; L-proline biosynthesis; L-glutamate 5-semialdehyde from L-glutamate: step 1/2. In terms of biological role, catalyzes the transfer of a phosphate group to glutamate to form L-glutamate 5-phosphate. The protein is Glutamate 5-kinase 1 of Bacillus subtilis (strain 168).